A 318-amino-acid polypeptide reads, in one-letter code: 2-keto-3-deoxygluconate permease (318 aa).

10 helical membrane-spanning segments follow: residues 10–30, 42–62, 82–102, 109–129, 139–159, 163–183, 194–214, 224–244, 257–277, and 289–309; these read LPGGMMLVPLLLGAVCHTLWP, GLISGTVPILAVWFFCMGATI, IAMAWLVAVLCAPLLPIGGVP, LSVLALVAAMDMTNGGLYAAL, AGAVVLMSLESGPLISMLILG, LASFDPLLFVGAVLPLLLGFA, FFAQATTTLVPFFGFALGNTL, ASGVLLGVAVIVITGLPLLLA, VAASSTAGAAVATPALIAGMA, and ALVASAVIVTSLLVPLLTALY.

Belongs to the KdgT transporter family.

It is found in the cell inner membrane. It carries out the reaction 2-dehydro-3-deoxy-D-gluconate(in) + H(+)(in) = 2-dehydro-3-deoxy-D-gluconate(out) + H(+)(out). Catalyzes the proton-dependent uptake of 2-keto-3-deoxygluconate (KDG) into the cell. This is 2-keto-3-deoxygluconate permease from Xanthomonas euvesicatoria pv. vesicatoria (strain 85-10) (Xanthomonas campestris pv. vesicatoria).